We begin with the raw amino-acid sequence, 716 residues long: Protein C-mannosyl-transferase DPY19L3 (716 aa).

Over 1–43 the chain is Cytoplasmic; the sequence is MMYIRQRKETKPIEVSEDFPSPKEDVKLEKKLPSGCASGRFWK. Residues 44-64 traverse the membrane as a helical segment; sequence ILSSAVGGTVALCIGLLTSVY. Residues 65–154 are Lumenal-facing; it reads LATLHENDLW…RVLPIQKYLE (90 aa). N-linked (GlcNAc...) asparagine glycosylation occurs at Asn118. A helical membrane pass occupies residues 155–182; the sequence is PVYFYIYTLFGLQAVYVTALYITSWLLS. Topologically, residues 183 to 184 are cytoplasmic; that stretch reads GT. Positions 185–197 form an intramembrane region, name=3; it reads WLSGLLAALWYVT. The Cytoplasmic portion of the chain corresponds to 198–215; sequence NRIDTTRVEFTIPLRENW. The name=4 intramembrane region spans 216–230; that stretch reads ALPFFAIQIAAITYF. The Cytoplasmic portion of the chain corresponds to 231–239; it reads LRPNLQPLS. A helical transmembrane segment spans residues 240–256; the sequence is ERLTLLAIFVSTFLFSL. At 257–262 the chain is on the lumenal side; sequence TWQFNQ. Residues 263–279 traverse the membrane as a helical segment; the sequence is FMMLLQALVLFILDSLD. The Cytoplasmic segment spans residues 280–289; sequence MLPAMKATWL. Residues 290–306 form a helical membrane-spanning segment; that stretch reads YGIQISCLLLVCTLQFF. Residues 307–308 lie on the Lumenal side of the membrane; the sequence is NS. A helical membrane pass occupies residues 309 to 323; sequence MILGSLLISFNLSVL. Topologically, residues 324-338 are cytoplasmic; sequence IVRKLQKNLKTGSFL. A helical transmembrane segment spans residues 339–359; sequence TRIWKLLLHLLLVFCLTLFLN. The Lumenal segment spans residues 360–414; sequence NIIKKVLNLKSDEHIFKFLKAKFGFGATRDFDANLYLCEEAFGLLPLNTFQRLSE. Residues 415 to 437 traverse the membrane as a helical segment; the sequence is TLLFYAYMFVLVVTVVTASVVAF. At 438–465 the chain is on the cytoplasmic side; sequence HNLSDSTSLKSMDQTRKRAVDLKPEAAY. Residues 466-485 traverse the membrane as a helical segment; the sequence is NLIHTILFGVLALSTMRMKY. Residues 486-487 lie on the Lumenal side of the membrane; sequence LW. The chain crosses the membrane as a helical span at residues 488–499; that stretch reads TSHMCVFASFGL. Residues 500 to 522 lie on the Cytoplasmic side of the membrane; it reads CSSEVWELLLRLVHLCNPKRIWV. A helical membrane pass occupies residues 523-539; sequence LRYLVPVLTLLYLCYKS. The Lumenal portion of the chain corresponds to 540-716; it reads WPGVMDELSE…FHVYKLSRNK (177 aa). The N-linked (GlcNAc...) asparagine glycan is linked to Asn704.

This sequence belongs to the dpy-19 family.

It localises to the endoplasmic reticulum membrane. It catalyses the reaction L-tryptophyl-[protein] + a di-trans,poly-cis-dolichyl beta-D-mannosyl phosphate = C-alpha-D-mannosyl-L-tryptophyl-[protein] + a di-trans,poly-cis-dolichyl phosphate + H(+). It functions in the pathway protein modification; protein glycosylation. In terms of biological role, C-mannosyltransferase that mediates C-mannosylation of tryptophan residues on target proteins. The reaction occurs on the luminal side of the endoplasmic reticulum and involves the transfer of a mannose unit from a dolichylphosphate mannose (Dol-P-Man) donor to an acceptor protein containing a WxxW or WxxC consensus sequence. C-mannosylates RSPO1, a Wnt signaling regulator, preferentially at the first Trp residue in the sequence WxxW. C-mannosylates the netrin receptor UNC5A, preferentially at the third tryptophan of WxxWxxWxxC sequence. The chain is Protein C-mannosyl-transferase DPY19L3 (Dpy19l3) from Mus musculus (Mouse).